Here is a 208-residue protein sequence, read N- to C-terminus: 3-isopropylmalate dehydratase small subunit (208 aa).

Belongs to the LeuD family. LeuD type 1 subfamily. Heterodimer of LeuC and LeuD.

It catalyses the reaction (2R,3S)-3-isopropylmalate = (2S)-2-isopropylmalate. Its pathway is amino-acid biosynthesis; L-leucine biosynthesis; L-leucine from 3-methyl-2-oxobutanoate: step 2/4. Its function is as follows. Catalyzes the isomerization between 2-isopropylmalate and 3-isopropylmalate, via the formation of 2-isopropylmaleate. This is 3-isopropylmalate dehydratase small subunit from Granulibacter bethesdensis (strain ATCC BAA-1260 / CGDNIH1).